The chain runs to 752 residues: Photosystem I P700 chlorophyll a apoprotein A1 (752 aa).

The next 8 helical transmembrane spans lie at 73 to 96 (IFSA…FHGA), 159 to 182 (LYWI…FHYH), 198 to 222 (MNHH…HIAL), 294 to 312 (IAHH…GHMY), 349 to 372 (WHAQ…HHMY), 388 to 414 (LSLF…IFMV), 436 to 458 (AIIS…LYIH), and 533 to 551 (FMVH…LILL). Positions 575 and 584 each coordinate [4Fe-4S] cluster. The next 2 membrane-spanning stretches (helical) occupy residues 591–612 (HVFL…HFSW) and 666–688 (SSAY…MFLF). Histidine 677 lines the chlorophyll a' pocket. Methionine 685 and tyrosine 693 together coordinate chlorophyll a. Tryptophan 694 contacts phylloquinone. A helical transmembrane segment spans residues 726-746 (AVGLAHYLLGGIGTTWSFFLA).

This sequence belongs to the PsaA/PsaB family. As to quaternary structure, the PsaA/B heterodimer binds the P700 chlorophyll special pair and subsequent electron acceptors. PSI consists of a core antenna complex that captures photons, and an electron transfer chain that converts photonic excitation into a charge separation. The eukaryotic PSI reaction center is composed of at least 11 subunits. P700 is a chlorophyll a/chlorophyll a' dimer, A0 is one or more chlorophyll a, A1 is one or both phylloquinones and FX is a shared 4Fe-4S iron-sulfur center. is required as a cofactor.

The protein localises to the plastid. The protein resides in the chloroplast thylakoid membrane. It catalyses the reaction reduced [plastocyanin] + hnu + oxidized [2Fe-2S]-[ferredoxin] = oxidized [plastocyanin] + reduced [2Fe-2S]-[ferredoxin]. Functionally, psaA and PsaB bind P700, the primary electron donor of photosystem I (PSI), as well as the electron acceptors A0, A1 and FX. PSI is a plastocyanin/cytochrome c6-ferredoxin oxidoreductase, converting photonic excitation into a charge separation, which transfers an electron from the donor P700 chlorophyll pair to the spectroscopically characterized acceptors A0, A1, FX, FA and FB in turn. Oxidized P700 is reduced on the lumenal side of the thylakoid membrane by plastocyanin or cytochrome c6. The sequence is that of Photosystem I P700 chlorophyll a apoprotein A1 from Trieres chinensis (Marine centric diatom).